Reading from the N-terminus, the 330-residue chain is Transcription factor zip1 (330 aa).

Residues Ser-133–Glu-148 are compositionally biased toward basic and acidic residues. Disordered regions lie at residues Ser-133–Ser-165 and Pro-238–Ala-277. Residues Lys-150 to Ser-165 show a composition bias toward low complexity. The span at Lys-244 to Ile-262 shows a compositional bias: polar residues. One can recognise a bZIP domain in the interval Thr-264 to Thr-327. The interval Lys-270–Lys-288 is basic motif. The leucine-zipper stretch occupies residues Leu-292–Leu-320.

This sequence belongs to the bZIP family. As to quaternary structure, interacts with pof1.

The protein localises to the nucleus. Its function is as follows. Mediates cell growth arrest in response to cadmium exposure, which is essential to maintain cell viability. Regulates cadmium stress specific genes. The sequence is that of Transcription factor zip1 (zip1) from Schizosaccharomyces pombe (strain 972 / ATCC 24843) (Fission yeast).